The following is a 142-amino-acid chain: Hemoglobin subunit alpha-A (142 aa).

In terms of domain architecture, Globin spans 2-142; it reads VLSPTDKSIV…VSTVLTSKYR (141 aa). O2 is bound at residue His-59. Residue His-88 coordinates heme b.

Belongs to the globin family. Heterotetramer of two alpha chains and two beta chains. As to expression, red blood cells.

Its function is as follows. Involved in oxygen transport from the lung to the various peripheral tissues. In Otolemur crassicaudatus (Brown greater galago), this protein is Hemoglobin subunit alpha-A (HBAA).